The following is a 288-amino-acid chain: Ribosomal RNA small subunit methyltransferase A (288 aa).

The span at 1–14 (MSKNQGGNKHQGGS) shows a compositional bias: polar residues. The tract at residues 1-21 (MSKNQGGNKHQGGSKTHLGHR) is disordered. S-adenosyl-L-methionine is bound by residues Asn-29, Leu-31, Gly-56, Glu-77, Asp-102, and Asn-122.

The protein belongs to the class I-like SAM-binding methyltransferase superfamily. rRNA adenine N(6)-methyltransferase family. RsmA subfamily.

The protein localises to the cytoplasm. The catalysed reaction is adenosine(1518)/adenosine(1519) in 16S rRNA + 4 S-adenosyl-L-methionine = N(6)-dimethyladenosine(1518)/N(6)-dimethyladenosine(1519) in 16S rRNA + 4 S-adenosyl-L-homocysteine + 4 H(+). Specifically dimethylates two adjacent adenosines (A1518 and A1519) in the loop of a conserved hairpin near the 3'-end of 16S rRNA in the 30S particle. May play a critical role in biogenesis of 30S subunits. In Idiomarina loihiensis (strain ATCC BAA-735 / DSM 15497 / L2-TR), this protein is Ribosomal RNA small subunit methyltransferase A.